The primary structure comprises 278 residues: Pantothenate synthetase (278 aa).

Residue 26–33 participates in ATP binding; sequence MGNLHEGH. The Proton donor role is filled by His-33. Gln-57 provides a ligand contact to (R)-pantoate. Position 57 (Gln-57) interacts with beta-alanine. 144–147 is a binding site for ATP; it reads GKKD. Gln-150 is a binding site for (R)-pantoate. Residues Gly-173 and 181-184 contribute to the ATP site; that span reads LSSR.

The protein belongs to the pantothenate synthetase family. Homodimer.

Its subcellular location is the cytoplasm. The enzyme catalyses (R)-pantoate + beta-alanine + ATP = (R)-pantothenate + AMP + diphosphate + H(+). Its pathway is cofactor biosynthesis; (R)-pantothenate biosynthesis; (R)-pantothenate from (R)-pantoate and beta-alanine: step 1/1. Functionally, catalyzes the condensation of pantoate with beta-alanine in an ATP-dependent reaction via a pantoyl-adenylate intermediate. This Neisseria meningitidis serogroup C / serotype 2a (strain ATCC 700532 / DSM 15464 / FAM18) protein is Pantothenate synthetase.